The sequence spans 551 residues: Rqc2 homolog RqcH (551 aa).

Belongs to the NEMF family. Associates with stalled 50S ribosomal subunits, binds to RqcP. Interacts with human fibronectin.

Its subcellular location is the secreted. It localises to the capsule. The protein resides in the cell surface. It is found in the cytoplasm. In terms of biological role, key component of the ribosome quality control system (RQC), a ribosome-associated complex that mediates the extraction of incompletely synthesized nascent chains from stalled ribosomes and their subsequent degradation. RqcH recruits Ala-charged tRNA, and with RqcP directs the elongation of stalled nascent chains on 50S ribosomal subunits, leading to non-templated C-terminal alanine extensions (Ala tail). The Ala tail promotes nascent chain degradation. May add between 1 and at least 8 Ala residues. Binds to stalled 50S ribosomal subunits. Plays a significant role in virulence. Recombinant protein binds to immobilized human fibronectin; binding is saturable and competed by heparin. Purified protein inhibits binding of whole cells to fibronectin. The chain is Rqc2 homolog RqcH from Streptococcus pneumoniae serotype 2 (strain D39 / NCTC 7466).